Here is a 282-residue protein sequence, read N- to C-terminus: D-alanine aminotransferase (282 aa).

Tyr-32 provides a ligand contact to substrate. Residue Arg-51 coordinates pyridoxal 5'-phosphate. Arg-99 and His-101 together coordinate substrate. Lys-146 serves as the catalytic Proton acceptor. An N6-(pyridoxal phosphate)lysine modification is found at Lys-146. Residue Glu-178 participates in pyridoxal 5'-phosphate binding.

The protein belongs to the class-IV pyridoxal-phosphate-dependent aminotransferase family. Homodimer. Pyridoxal 5'-phosphate serves as cofactor.

The enzyme catalyses D-alanine + 2-oxoglutarate = D-glutamate + pyruvate. In terms of biological role, acts on the D-isomers of alanine, leucine, aspartate, glutamate, aminobutyrate, norvaline and asparagine. The enzyme transfers an amino group from a substrate D-amino acid to the pyridoxal phosphate cofactor to form pyridoxamine and an alpha-keto acid in the first half-reaction. The second half-reaction is the reverse of the first, transferring the amino group from the pyridoxamine to a second alpha-keto acid to form the product D-amino acid via a ping-pong mechanism. This is an important process in the formation of D-alanine and D-glutamate, which are essential bacterial cell wall components. This chain is D-alanine aminotransferase (dat), found in Staphylococcus aureus (strain MSSA476).